The chain runs to 147 residues: Thyrotropin subunit beta (147 aa).

The signal sequence occupies residues 1–20 (MRVVLLASGVLCLLAGQVLS). 6 disulfide bridges follow: C22–C72, C36–C87, C39–C126, C47–C103, C51–C105, and C108–C115. N43 is a glycosylation site (N-linked (GlcNAc...) asparagine).

It belongs to the glycoprotein hormones subunit beta family. As to quaternary structure, heterodimer of a common alpha chain and a unique beta chain which confers biological specificity to thyrotropin, lutropin, follitropin and gonadotropin.

The protein localises to the secreted. In terms of biological role, indispensable for the control of thyroid structure and metabolism. May play some role in the biological processes of the immature fishes. The protein is Thyrotropin subunit beta (tshb) of Anguilla japonica (Japanese eel).